The chain runs to 155 residues: Ribosomal RNA large subunit methyltransferase H 1 (155 aa).

Residues Leu76, Gly108, and 127–132 contribute to the S-adenosyl-L-methionine site; that span reads FSKMTF.

The protein belongs to the RNA methyltransferase RlmH family. In terms of assembly, homodimer.

Its subcellular location is the cytoplasm. It catalyses the reaction pseudouridine(1915) in 23S rRNA + S-adenosyl-L-methionine = N(3)-methylpseudouridine(1915) in 23S rRNA + S-adenosyl-L-homocysteine + H(+). Its function is as follows. Specifically methylates the pseudouridine at position 1915 (m3Psi1915) in 23S rRNA. This is Ribosomal RNA large subunit methyltransferase H 1 from Thermoanaerobacter pseudethanolicus (strain ATCC 33223 / 39E) (Clostridium thermohydrosulfuricum).